The following is a 257-amino-acid chain: UPF0246 protein PC1_3665 (257 aa).

The protein belongs to the UPF0246 family.

The chain is UPF0246 protein PC1_3665 from Pectobacterium carotovorum subsp. carotovorum (strain PC1).